Here is a 1016-residue protein sequence, read N- to C-terminus: MLVGSQSFSPGGPNGIIRSQSFAGFSGLQERRSRCNSFIENSSAVKKPQAKLKKMHNLGHKNSSPPKEPQPKRVEEVYRALKNGLDEYLEVHQTELDKLTTQLKDMRRNSRLGVLYDLDKQIKTIERYMRRLEFHISKVDELYEAYCIQRRLQDGASKMKQAFATSPASKAARESLAEINRSYKEYTENMCAIEAELEKQLGEFSIKMKGLAGFARLCPGDQYEIFMKYGRQRWKLKGRIEVNGKQSWDGEEMVFLPLIVGFISIKVTELKGLATHLLVGSVTCETKELFAARPQVVAVDINDLGTIKLNLEITWYPFDVEDMTPSSGAGNKVAALQRRMSMYSQGTPETPTFKDHSFFSNLPDDIFENGKAAEEKMPLSLSFSDLPNGDCTLAPGPADSLPGACAANPEITITSTELPPGSQSSQNEGLKDSSSASCSSSSREGSEPRPHPEGETQGLGKPEGCPVATGARPERLFLQKGVAEALLQEALLQEPSELKPVELDTFEGNITKQLVKRLTSAEVPAATERLLSEGSISAESEGCRSFLDGSLEDAFNGLFLALEPHKEQYKEFQDLNQEVMHLDDILKCKPAVSRSRSSSLSLTVESALESFDFLNTSDFDEEEDGDEVCNVGGGADSVFSDTETEKNSYRSVHPEARGHLSEALTEDTGVGTSVAGSPLPLTTGNESLDLTIIRHLQYCTQLVQQIVLSSKTPFVASNLLEKLSRQIQVMEKLSAVSDENIGNISSVIEAIPEFHKKLSLLSFWTKCCTPIGVYHSSADRVIKQLEASFARTVNRDYPGLADPVFHTLVSQILDRAEPLLPASLSSEVITVFQYYSYFTSHGVSDLESYLNQLAKQVSVVQTLQSLRDEKLLQAVSDLAPGSFPAPQEEVLRTLALLLTGEDSGASEAVTLYLTAASRSEHFREKALLYYCEALTKTDFRLQKAACLALKSLKATESIKMLVTLCQSDTEEIRNVASETLLSLGEDGRLAYEQLDKFPRDCVKVGGRLASEVATAF.

Phosphoserine is present on residues S21 and S37. The interval 44–73 (AVKKPQAKLKKMHNLGHKNSSPPKEPQPKR) is disordered. Basic residues predominate over residues 48–59 (PQAKLKKMHNLG). Residues 55–113 (MHNLGHKNSSPPKEPQPKRVEEVYRALKNGLDEYLEVHQTELDKLTTQLKDMRRNSRLG) are involved in cell filopodia formation. The stretch at 85–112 (LDEYLEVHQTELDKLTTQLKDMRRNSRL) forms a coiled coil. The residue at position 341 (S341) is a Phosphoserine. The span at 414–428 (TSTELPPGSQSSQNE) shows a compositional bias: polar residues. The segment at 414 to 469 (TSTELPPGSQSSQNEGLKDSSSASCSSSSREGSEPRPHPEGETQGLGKPEGCPVAT) is disordered. Low complexity predominate over residues 433-442 (SSSASCSSSS). A compositionally biased stretch (basic and acidic residues) spans 444-454 (EGSEPRPHPEG). S520 and S532 each carry phosphoserine. Residues 636–656 (DSVFSDTETEKNSYRSVHPEA) are disordered. Basic and acidic residues predominate over residues 643 to 656 (ETEKNSYRSVHPEA).

It belongs to the RIPOR family. Homooligomer; homooligomerization is regulated by RHOC and leads to the formation of concatemers through the association of N- and C-termini. Interacts (phosphorylated form) with 14-3-3 proteins; these interactions occur during myogenic cell differentiation and also induces T cell proliferation arrest. Interacts (phosphorylated form) with HDAC6; this interaction occurs during early myogenic differentiation, prevents HDAC6 to deacetylate tubulin and also induces T cell proliferation arrest. Interacts with DYSF; this interaction occurs during early myogenic differentiation. Interacts with MYOF. Interacts (via active GTP- or inactive GDP-bound forms) with RHOA; this interaction is direct, blocks the loading of GTP to RHOA and decreases upon chemokine CCL19 stimulation in primary T lymphocytes. Interacts with RHOC. Interacts (via phosphorylated form) with YWHAB; this interaction occurs in a chemokine-dependent manner and does not compete for binding of RIPOR2 with RHOA nor blocks inhibition of RIPOR2-mediated RHOA activity. Interacts with YWHAE. Interacts with YWHAQ. Post-translationally, phosphorylated. Chemokine-induced phosphorylation in neutrophils occurs in a PKC- and AKT-dependent manner, resulting in RIPOR2 interaction with YWHAB and stabilization. Phosphorylated by PKCA, AKT1 and MAPKAPK1A; in vitro.

Its subcellular location is the cytoplasm. It is found in the cytoskeleton. The protein resides in the cell projection. The protein localises to the filopodium. It localises to the apical cell membrane. Its subcellular location is the stereocilium. It is found in the stereocilium membrane. Its function is as follows. Acts as an inhibitor of the small GTPase RHOA and plays several roles in the regulation of myoblast and hair cell differentiation, lymphocyte T proliferation and neutrophil polarization. Plays a role in fetal mononuclear myoblast differentiation by promoting filopodia and myotube formation. Maintains naive T lymphocytes in a quiescent state and prevents chemokine-induced T lymphocyte responses, such as cell adhesion, polarization and migration. Involved also in the regulation of neutrophil polarization, chemotaxis and adhesion. Required for normal development of inner and outer hair cell stereocilia within the cochlea of the inner ear. Plays a role for maintaining the structural organization of the basal domain of stereocilia. Involved in mechanosensory hair cell function. Required for normal hearing. This is Rho family-interacting cell polarization regulator 2 from Bos taurus (Bovine).